Reading from the N-terminus, the 217-residue chain is Large ribosomal subunit protein uL1 (217 aa).

This sequence belongs to the universal ribosomal protein uL1 family.

The sequence is that of Large ribosomal subunit protein uL1 (RpL10A) from Spodoptera frugiperda (Fall armyworm).